The following is a 180-amino-acid chain: Translation initiation factor IF-3 (180 aa).

This sequence belongs to the IF-3 family. As to quaternary structure, monomer.

The protein resides in the cytoplasm. IF-3 binds to the 30S ribosomal subunit and shifts the equilibrium between 70S ribosomes and their 50S and 30S subunits in favor of the free subunits, thus enhancing the availability of 30S subunits on which protein synthesis initiation begins. In Shewanella oneidensis (strain ATCC 700550 / JCM 31522 / CIP 106686 / LMG 19005 / NCIMB 14063 / MR-1), this protein is Translation initiation factor IF-3.